A 552-amino-acid polypeptide reads, in one-letter code: Arginine--tRNA ligase (552 aa).

A 'HIGH' region motif is present at residues 124-134; it reads GNPTGPLHLAH.

The protein belongs to the class-I aminoacyl-tRNA synthetase family. As to quaternary structure, monomer.

It localises to the cytoplasm. The catalysed reaction is tRNA(Arg) + L-arginine + ATP = L-arginyl-tRNA(Arg) + AMP + diphosphate. In Tropheryma whipplei (strain Twist) (Whipple's bacillus), this protein is Arginine--tRNA ligase.